A 202-amino-acid chain; its full sequence is Coiled-coil domain-containing protein 85B (202 aa).

M1 carries the post-translational modification N-acetylmethionine. 2 coiled-coil regions span residues 43 to 90 (GRLM…ERQR) and 118 to 147 (QKLAELEGRQEELLRENLALKELCLALGEE). Residues 148 to 202 (WGPRGGPSGAGGSGAGPAPELALPPCGPRDLGDGSSSTGSVGSPDQLPLACSPDD) form a disordered region. Gly residues predominate over residues 150 to 162 (PRGGPSGAGGSGA). Positions 180-190 (DGSSSTGSVGS) are enriched in low complexity.

This sequence belongs to the CCDC85 family. As to quaternary structure, interacts with CEBPB. Interacts with EURL. May interact with CEBPD. Interacts with MCRS1. Interacts with TCF7L2; competes with CTNNB1. Interacts with ANKRD26. Interacts with the beta-catenin family proteins ARVCF, CTNND1, CTNND2 and PKP4. (Microbial infection) Interacts with the viral phosphoprotein hepatitis delta antigen (HDAG); this interaction affects hepatitis delta virus (HDV) genomic replication in intact cells. As to expression, widely expressed including liver.

The protein resides in the nucleus. Its subcellular location is the cytoplasm. The protein localises to the cytoskeleton. It is found in the microtubule organizing center. It localises to the centrosome. The protein resides in the cell junction. Its subcellular location is the adherens junction. Its function is as follows. Functions as a transcriptional repressor. May inhibit the activity of CTNNB1 in a TP53-dependent manner and thus regulate cell growth. May function in adipocyte differentiation, negatively regulating mitotic clonal expansion. Plays a role in cell-cell adhesion and epithelium development through its interaction with proteins of the beta-catenin family. In terms of biological role, (Microbial infection) Plays a role in hepatitis delta virus (HDV) genomic replication. The chain is Coiled-coil domain-containing protein 85B (CCDC85B) from Homo sapiens (Human).